Reading from the N-terminus, the 343-residue chain is Cytoplasmic tRNA 2-thiolation protein 1 (343 aa).

This sequence belongs to the TtcA family. CTU1/NCS6/ATPBD3 subfamily.

The protein resides in the cytoplasm. Its pathway is tRNA modification; 5-methoxycarbonylmethyl-2-thiouridine-tRNA biosynthesis. Functionally, plays a central role in 2-thiolation of mcm(5)S(2)U at tRNA wobble positions of tRNA(Lys), tRNA(Glu) and tRNA(Gln). Directly binds tRNAs and probably acts by catalyzing adenylation of tRNAs, an intermediate required for 2-thiolation. It is unclear whether it acts as a sulfurtransferase that transfers sulfur from thiocarboxylated URM1 onto the uridine of tRNAs at wobble position. This Drosophila willistoni (Fruit fly) protein is Cytoplasmic tRNA 2-thiolation protein 1.